The sequence spans 234 residues: Sugar fermentation stimulation protein homolog (234 aa).

This sequence belongs to the SfsA family.

This is Sugar fermentation stimulation protein homolog from Shewanella sp. (strain MR-7).